Here is a 535-residue protein sequence, read N- to C-terminus: Proto-oncogene tyrosine-protein kinase Src (535 aa).

The segment at 1 to 56 (MGSNKSKPKDASQRRRSLEPSENVHGAGGAFPASQTPSKPASADGHRGPSAAFVPP) is disordered. G2 is lipidated: N-myristoyl glycine. Residues 7-19 (KPKDASQRRRSLE) show a composition bias toward basic and acidic residues. Phosphoserine occurs at positions 17, 21, and 74. One can recognise an SH3 domain in the interval 83–144 (GGVTTFVALY…PSNYVAPSDS (62 aa)). One can recognise an SH2 domain in the interval 150 to 247 (WYFGKITRRE…GLCHRLTTVC (98 aa)). Phosphotyrosine is present on Y186. The region spanning 269–522 (LRLEVKLGQG…YLQAFLEDYF (254 aa)) is the Protein kinase domain. Residues 275 to 283 (LGQGCFGEV) and K297 contribute to the ATP site. Catalysis depends on D388, which acts as the Proton acceptor. Phosphotyrosine; by autocatalysis is present on Y418. At Y418 the chain carries Phosphotyrosine; by FAK2. Residue Y529 is modified to Phosphotyrosine; by CSK.

This sequence belongs to the protein kinase superfamily. Tyr protein kinase family. SRC subfamily. Part of a complex comprised of PTPRA, BCAR1, BCAR3 (via SH2 domain) and SRC; the formation of the complex is dependent on integrin mediated-tyrosine phosphorylation of PTPRA. Interacts with CDCP1, TGFB1I1 and TOM1L2. Interacts with DDEF1/ASAP1 via its SH3 domain. Interacts with CCPG1. Interacts with the cytoplasmic domain of MUC1, phosphorylates it and increases binding of MUC1 with beta-catenin. Interacts with RALGPS1 via its SH3 domain. Interacts with CAV2 (tyrosine phosphorylated form). Interacts (via the SH3 domain and the protein kinase domain) with ARRB1; the interaction is independent of the phosphorylation state of SRC C-terminus. Interacts with FCAMR and PXN. Interacts with ARRB2. Interacts with ARRB1. Interacts with SRCIN1. Interacts with NDFIP2 and more weakly with NDFIP1. Interacts with PIK3CA and/or PIK3C2B, PTK2/FAK1, ESR1 (dimethylated on arginine) and FAK. Interacts (via SH2 and SH3 domain) with TNK2. Interacts (via protein kinase domain) with the tyrosine phosphorylated form of RUNX3 (via runt domain). Interacts with TRAF3 (via RING-type zinc finger domain). Interacts with RIGI, MAVS and TBK1. Interacts (via SH2 domain) with RACK1; the interaction is enhanced by tyrosine phosphorylation of RACK1 and inhibits SRC activity. Interacts (via SH2 domain) with the 'Tyr-402' phosphorylated form of PTK2B/PYK2. Interacts (via SH2 domain) with FLT3 (tyrosine phosphorylated). Identified in a complex containing FGFR4, NCAM1, CDH2, PLCG1, FRS2, SRC, SHC1, GAP43 and CTTN. Interacts with EPHB1; activates the MAPK/ERK cascade to regulate cell migration. Interacts with ERBB2 and STAT1. Interacts with PDGFRA (tyrosine phosphorylated). Interacts with CSF1R. Interacts (via SH2 domain) with the 'Tyr-9' phosphorylated form of PDPK1. Interacts with DDR2. Interacts with AMOTL2; this interaction regulates the translocation of phosphorylated SRC to peripheral cell-matrix adhesion sites. Interacts with DDR1 and DAB2. Interacts with TRAP1. Interacts with CBLC; the interaction is enhanced when SRC is phosphorylated at 'Tyr-424'. Interacts with ARHGEF5. Interacts (via cytoplasmic domain) with CEACAM1 (via SH2 domain); this interaction is regulated by trans-homophilic cell adhesion. Interacts with MPP2. Interacts with PRR7. Interacts (via kinase domain and to a lesser extent the SH2 domain) directly with PDLIM4; this interaction results in PTPN13-mediated dephosphorylation of this protein leading to its inactivation. Interacts with P85 (PIK3R1 or PIK3R2). Interacts with HNRNPA2B1. Interacts with IL6ST/gp130. Interacts (via SH3 domain) with PELP1 in the presence of 17-beta-estradiol. Interacts with AMBRA1. Post-translationally, myristoylated at Gly-2, and this is essential for targeting to membranes. Dephosphorylated at Tyr-529 by PTPRJ. Phosphorylated on Tyr-529 by c-Src kinase (CSK). The phosphorylated form is termed pp60c-src. Dephosphorylated by PTPRJ at Tyr-418. Normally maintained in an inactive conformation with the SH2 domain engaged with Tyr-529, the SH3 domain engaged with the SH2-kinase linker, and Tyr-418 dephosphorylated. Dephosphorylation of Tyr-529 as a result of protein tyrosine phosphatase (PTP) action disrupts the intramolecular interaction between the SH2 domain and Tyr-529, Tyr-418 can then become autophosphorylated, resulting in SRC activation. Phosphorylation of Tyr-529 by CSK allows this interaction to reform, resulting in SRC inactivation. CDK5-mediated phosphorylation at Ser-74 targets SRC to ubiquitin-dependent degradation and thus leads to cytoskeletal reorganization. Phosphorylated by PTK2/FAK1; this enhances kinase activity. Phosphorylated by PTK2B/PYK2; this enhances kinase activity. Upon activation of IL6ST by IL6, Tyr-418 is phosphorylated and Tyr-529 dephosphorylated. In terms of processing, displays reduced levels of autophosphorylation at Tyr-418 compared to isoform 2. Post-translationally, displays enhanced levels of autophosphorylation at Tyr-418 compared to isoform 1. S-nitrosylation is important for activation of its kinase activity. In terms of processing, ubiquitinated in response to CDK5-mediated phosphorylation. Ubiquitination mediated by CBLC requires SRC autophosphorylation at Tyr-418 and may lead to lysosomal degradation.

The protein localises to the cell membrane. It is found in the mitochondrion inner membrane. The protein resides in the nucleus. Its subcellular location is the cytoplasm. It localises to the cytoskeleton. The protein localises to the perinuclear region. It is found in the cell junction. The protein resides in the focal adhesion. The catalysed reaction is L-tyrosyl-[protein] + ATP = O-phospho-L-tyrosyl-[protein] + ADP + H(+). Phosphorylation by CSK at Tyr-529 inhibits kinase activity. Inhibitory phosphorylation at Tyr-529 is enhanced by heme. Further phosphorylation by CDK1 partially reactivates CSK-inactivated SRC and facilitates complete reactivation by protein tyrosine phosphatase PTPRC. Integrin engagement stimulates kinase activity. Phosphorylation by PTK2/FAK1 enhances kinase activity. Butein and pseudosubstrate-based peptide inhibitors like CIYKYYF act as inhibitors. Phosphorylation at Tyr-418 increases kinase activity. Non-receptor protein tyrosine kinase which is activated following engagement of many different classes of cellular receptors including immune response receptors, integrins and other adhesion receptors, receptor protein tyrosine kinases, G protein-coupled receptors as well as cytokine receptors. Participates in signaling pathways that control a diverse spectrum of biological activities including gene transcription, immune response, cell adhesion, cell cycle progression, apoptosis, migration, and transformation. Due to functional redundancy between members of the SRC kinase family, identification of the specific role of each SRC kinase is very difficult. SRC appears to be one of the primary kinases activated following engagement of receptors and plays a role in the activation of other protein tyrosine kinase (PTK) families. Receptor clustering or dimerization leads to recruitment of SRC to the receptor complexes where it phosphorylates the tyrosine residues within the receptor cytoplasmic domains. Plays an important role in the regulation of cytoskeletal organization through phosphorylation of specific substrates such as AFAP1. Phosphorylation of AFAP1 allows the SRC SH2 domain to bind AFAP1 and to localize to actin filaments. Cytoskeletal reorganization is also controlled through the phosphorylation of cortactin (CTTN). When cells adhere via focal adhesions to the extracellular matrix, signals are transmitted by integrins into the cell resulting in tyrosine phosphorylation of a number of focal adhesion proteins, including PTK2/FAK1 and paxillin (PXN). In addition to phosphorylating focal adhesion proteins, SRC is also active at the sites of cell-cell contact adherens junctions and phosphorylates substrates such as beta-catenin (CTNNB1), delta-catenin (CTNND1), and plakoglobin (JUP). Another type of cell-cell junction, the gap junction, is also a target for SRC, which phosphorylates connexin-43 (GJA1). SRC is implicated in regulation of pre-mRNA-processing and phosphorylates RNA-binding proteins such as KHDRBS1. Phosphorylates PKP3 at 'Tyr-195' in response to reactive oxygen species, which may cause the release of PKP3 from desmosome cell junctions into the cytoplasm. Also plays a role in PDGF-mediated tyrosine phosphorylation of both STAT1 and STAT3, leading to increased DNA binding activity of these transcription factors. Involved in the RAS pathway through phosphorylation of RASA1 and RASGRF1. Plays a role in EGF-mediated calcium-activated chloride channel activation. Required for epidermal growth factor receptor (EGFR) internalization through phosphorylation of clathrin heavy chain (CLTC and CLTCL1) at 'Tyr-1477'. Involved in beta-arrestin (ARRB1 and ARRB2) desensitization through phosphorylation and activation of GRK2, leading to beta-arrestin phosphorylation and internalization. Has a critical role in the stimulation of the CDK20/MAPK3 mitogen-activated protein kinase cascade by epidermal growth factor. Might be involved not only in mediating the transduction of mitogenic signals at the level of the plasma membrane but also in controlling progression through the cell cycle via interaction with regulatory proteins in the nucleus. Plays an important role in osteoclastic bone resorption in conjunction with PTK2B/PYK2. Both the formation of a SRC-PTK2B/PYK2 complex and SRC kinase activity are necessary for this function. Recruited to activated integrins by PTK2B/PYK2, thereby phosphorylating CBL, which in turn induces the activation and recruitment of phosphatidylinositol 3-kinase to the cell membrane in a signaling pathway that is critical for osteoclast function. Promotes energy production in osteoclasts by activating mitochondrial cytochrome C oxidase. Phosphorylates DDR2 on tyrosine residues, thereby promoting its subsequent autophosphorylation. Phosphorylates RUNX3 and COX2 on tyrosine residues, TNK2 on 'Tyr-284' and CBL on 'Tyr-738'. Enhances RIGI-elicited antiviral signaling. Phosphorylates PDPK1 at 'Tyr-9', 'Tyr-373' and 'Tyr-376'. Phosphorylates BCAR1 at 'Tyr-226'. Phosphorylates CBLC at multiple tyrosine residues, phosphorylation at 'Tyr-341' activates CBLC E3 activity. Phosphorylates synaptic vesicle protein synaptophysin (SYP). Involved in anchorage-independent cell growth. Required for podosome formation. Mediates IL6 signaling by activating YAP1-NOTCH pathway to induce inflammation-induced epithelial regeneration. Phosphorylates OTUB1, promoting deubiquitination of RPTOR. Its function is as follows. Non-receptor protein tyrosine kinase which phosphorylates synaptophysin with high affinity. In terms of biological role, non-receptor protein tyrosine kinase which shows higher basal kinase activity than isoform 1, possibly due to weakened intramolecular interactions which enhance autophosphorylation of Tyr-418 and subsequent activation. The SH3 domain shows reduced affinity with the linker sequence between the SH2 and kinase domains which may account for the increased basal activity. Displays altered substrate specificity compared to isoform 1, showing weak affinity for synaptophysin and for peptide substrates containing class I or class II SH3 domain-binding motifs. Plays a role in L1CAM-mediated neurite elongation, possibly by acting downstream of L1CAM to drive cytoskeletal rearrangements involved in neurite outgrowth. The sequence is that of Proto-oncogene tyrosine-protein kinase Src from Mus musculus (Mouse).